The sequence spans 557 residues: Isocitrate lyase (557 aa).

Thr53 is subject to Phosphothreonine. 106–108 (SGW) provides a ligand contact to substrate. Asp179 is a Mg(2+) binding site. Cys217 functions as the Proton acceptor in the catalytic mechanism. Substrate-binding positions include 218–219 (GH), Arg254, 437–441 (NLSPS), and Thr471.

The protein belongs to the isocitrate lyase/PEP mutase superfamily. Isocitrate lyase family. In terms of assembly, homotetramer. Mg(2+) is required as a cofactor. In terms of processing, phosphorylated in response to elevated glucose levels, leading first to reversible inactivation of the enzyme (short-term inactivation), and at a later stage to proteolytic degradation of the protein (long-term inactivation).

Its subcellular location is the cytoplasm. The protein localises to the secreted. It is found in the extracellular space. It localises to the extracellular matrix. The protein resides in the vacuole. The catalysed reaction is D-threo-isocitrate = glyoxylate + succinate. It carries out the reaction (2S,3R)-3-hydroxybutane-1,2,3-tricarboxylate = pyruvate + succinate. The protein operates within carbohydrate metabolism; glyoxylate cycle; (S)-malate from isocitrate: step 1/2. Its activity is regulated as follows. Phosphorylated and inactivated after addition of glucose to the cell culture (repressing conditions). Functionally, catalyzes the formation of succinate and glyoxylate from isocitrate, a key step of the glyoxylate cycle, which operates as an anaplerotic route for replenishing the tricarboxylic acid cycle. Required for growth on ethanol or acetate, but dispensable when fermentable carbon sources are available. Also acts on 2-methylisocitrate. This chain is Isocitrate lyase, found in Saccharomyces cerevisiae (strain ATCC 204508 / S288c) (Baker's yeast).